The following is a 571-amino-acid chain: Cerebral cavernous malformations 2 protein-like (571 aa).

Disordered regions lie at residues 164-193, 212-295, and 544-571; these read AGVD…GTAE, AEAR…PQDP, and LAPD…DNYL. The segment covering 184 to 193 has biased composition (basic and acidic residues); sequence PEKRRVGTAE. Residues 212 to 223 show a composition bias toward gly residues; it reads AEARAGGGGGGS. Residues 237 to 251 are compositionally biased toward basic and acidic residues; the sequence is WERRQTFSGSWERRH. Over residues 253 to 264 the composition is skewed to gly residues; the sequence is GGGGGGGAGKPG. The segment covering 286–295 has biased composition (pro residues); sequence GPNPLDPQDP. The span at 545–555 shows a compositional bias: acidic residues; it reads APDDDDDDEDE.

The protein belongs to the CCM2 family.

This chain is Cerebral cavernous malformations 2 protein-like (CCM2L), found in Homo sapiens (Human).